A 61-amino-acid chain; its full sequence is Metallothionein-1C (61 aa).

The beta stretch occupies residues 1–29; the sequence is MDPNCSCSTGSSCSCAGSCTCKACRCPSC. A divalent metal cation contacts are provided by Cys-5, Cys-7, Cys-13, Cys-15, Cys-19, Cys-21, Cys-24, Cys-26, Cys-29, Cys-33, Cys-34, Cys-36, Cys-37, Cys-41, Cys-44, Cys-48, Cys-50, Cys-57, Cys-59, and Cys-60. Residues 30 to 61 are alpha; sequence KKSCCSCCPVGCAKCAQGCICKGASDKCSCCA.

This sequence belongs to the metallothionein superfamily. Type 1 family.

Functionally, metallothioneins have a high content of cysteine residues that bind various heavy metals; these proteins are transcriptionally regulated by both heavy metals and glucocorticoids. This chain is Metallothionein-1C (MT1C), found in Ovis aries (Sheep).